Consider the following 202-residue polypeptide: Ribosome maturation factor RimM (202 aa).

In terms of domain architecture, PRC barrel spans 121-202 (KDEYYWVDLI…CITVDWQPDY (82 aa)).

The protein belongs to the RimM family. In terms of assembly, binds ribosomal protein uS19.

Its subcellular location is the cytoplasm. Functionally, an accessory protein needed during the final step in the assembly of 30S ribosomal subunit, possibly for assembly of the head region. Essential for efficient processing of 16S rRNA. May be needed both before and after RbfA during the maturation of 16S rRNA. It has affinity for free ribosomal 30S subunits but not for 70S ribosomes. In Polaromonas sp. (strain JS666 / ATCC BAA-500), this protein is Ribosome maturation factor RimM.